The following is a 118-amino-acid chain: V-type proton ATPase subunit G 3 (118 aa).

Residues Met1–Leu12 show a composition bias toward polar residues. A disordered region spans residues Met1 to Thr44. Residues Ser5–Lys53 adopt a coiled-coil conformation. A compositionally biased stretch (basic and acidic residues) spans Ala14–Lys26.

This sequence belongs to the V-ATPase G subunit family. In terms of assembly, V-ATPase is a heteromultimeric enzyme made up of two complexes: the ATP-hydrolytic V1 complex and the proton translocation V0 complex. The V1 complex consists of three catalytic AB heterodimers that form a heterohexamer, three peripheral stalks each consisting of EG heterodimers, one central rotor including subunits D and F, and the regulatory subunits C and H. The proton translocation complex V0 consists of the proton transport subunit a, a ring of proteolipid subunits c9c'', rotary subunit d, subunits e and f, and the accessory subunits ATP6AP1/Ac45 and ATP6AP2/PRR. As to expression, kidney.

Its function is as follows. Subunit of the V1 complex of vacuolar(H+)-ATPase (V-ATPase), a multisubunit enzyme composed of a peripheral complex (V1) that hydrolyzes ATP and a membrane integral complex (V0) that translocates protons. V-ATPase is responsible for acidifying and maintaining the pH of intracellular compartments and in some cell types, is targeted to the plasma membrane, where it is responsible for acidifying the extracellular environment. This is V-type proton ATPase subunit G 3 (Atp6v1g3) from Mus musculus (Mouse).